We begin with the raw amino-acid sequence, 905 residues long: DNA mismatch repair protein MutS (905 aa).

The segment at 272–292 (KKPPLSPPSREATGSTMAIDP) is disordered. Residue 654–661 (GPNMAGKS) coordinates ATP.

It belongs to the DNA mismatch repair MutS family.

In terms of biological role, this protein is involved in the repair of mismatches in DNA. It is possible that it carries out the mismatch recognition step. This protein has a weak ATPase activity. This Rhodopseudomonas palustris (strain BisB18) protein is DNA mismatch repair protein MutS.